Here is a 264-residue protein sequence, read N- to C-terminus: Acyl-[acyl-carrier-protein]--UDP-N-acetylglucosamine O-acyltransferase (264 aa).

It belongs to the transferase hexapeptide repeat family. LpxA subfamily. As to quaternary structure, homotrimer.

It localises to the cytoplasm. It carries out the reaction a (3R)-hydroxyacyl-[ACP] + UDP-N-acetyl-alpha-D-glucosamine = a UDP-3-O-[(3R)-3-hydroxyacyl]-N-acetyl-alpha-D-glucosamine + holo-[ACP]. Its pathway is glycolipid biosynthesis; lipid IV(A) biosynthesis; lipid IV(A) from (3R)-3-hydroxytetradecanoyl-[acyl-carrier-protein] and UDP-N-acetyl-alpha-D-glucosamine: step 1/6. Functionally, involved in the biosynthesis of lipid A, a phosphorylated glycolipid that anchors the lipopolysaccharide to the outer membrane of the cell. The protein is Acyl-[acyl-carrier-protein]--UDP-N-acetylglucosamine O-acyltransferase of Chlorobium phaeobacteroides (strain DSM 266 / SMG 266 / 2430).